A 278-amino-acid chain; its full sequence is 4-diphosphocytidyl-2-C-methyl-D-erythritol kinase (278 aa).

Lys-9 is an active-site residue. Pro-89–Ala-99 lines the ATP pocket. Asp-128 is a catalytic residue.

Belongs to the GHMP kinase family. IspE subfamily.

The enzyme catalyses 4-CDP-2-C-methyl-D-erythritol + ATP = 4-CDP-2-C-methyl-D-erythritol 2-phosphate + ADP + H(+). It functions in the pathway isoprenoid biosynthesis; isopentenyl diphosphate biosynthesis via DXP pathway; isopentenyl diphosphate from 1-deoxy-D-xylulose 5-phosphate: step 3/6. In terms of biological role, catalyzes the phosphorylation of the position 2 hydroxy group of 4-diphosphocytidyl-2C-methyl-D-erythritol. In Cereibacter sphaeroides (strain ATCC 17029 / ATH 2.4.9) (Rhodobacter sphaeroides), this protein is 4-diphosphocytidyl-2-C-methyl-D-erythritol kinase.